The sequence spans 289 residues: Diaminopimelate epimerase (289 aa).

3 residues coordinate substrate: N17, Q47, and N67. The active-site Proton donor is the C76. Substrate-binding positions include 77–78 (GN), N164, N198, and 216–217 (ER). C225 (proton acceptor) is an active-site residue. 226 to 227 (GS) lines the substrate pocket.

Belongs to the diaminopimelate epimerase family. In terms of assembly, homodimer.

The protein resides in the cytoplasm. The catalysed reaction is (2S,6S)-2,6-diaminopimelate = meso-2,6-diaminopimelate. It participates in amino-acid biosynthesis; L-lysine biosynthesis via DAP pathway; DL-2,6-diaminopimelate from LL-2,6-diaminopimelate: step 1/1. Its function is as follows. Catalyzes the stereoinversion of LL-2,6-diaminopimelate (L,L-DAP) to meso-diaminopimelate (meso-DAP), a precursor of L-lysine and an essential component of the bacterial peptidoglycan. The sequence is that of Diaminopimelate epimerase from Bradyrhizobium sp. (strain BTAi1 / ATCC BAA-1182).